Consider the following 783-residue polypeptide: Probable phosphoketolase (783 aa).

It belongs to the XFP family. It depends on thiamine diphosphate as a cofactor.

The polypeptide is Probable phosphoketolase (Rhodopseudomonas palustris (strain TIE-1)).